Consider the following 329-residue polypeptide: Probable ABC transporter permease protein MG188 homolog (329 aa).

6 helical membrane-spanning segments follow: residues 30-50 (FLLFCPALLTTFLFTLVPFFL), 96-116 (IISLPLTIVLAIIISSAIVFV), 128-148 (VFFLPYVTSGVAVSIAFIYIL), 176-196 (ALWGILIFGIWKNMAFNVLVI), 234-254 (LIFLLTLLILGGMQVFPISLF), and 283-303 (NFAGAATLVLFILGVCYGLVL). One can recognise an ABC transmembrane type-1 domain in the interval 88-303 (LRNSFLYSII…ILGVCYGLVL (216 aa)).

This sequence belongs to the binding-protein-dependent transport system permease family. MalFG subfamily.

It localises to the cell membrane. Its function is as follows. Probably part of a binding-protein-dependent transport system. Probably responsible for the translocation of the substrate across the membrane. The protein is Probable ABC transporter permease protein MG188 homolog of Mycoplasma pneumoniae (strain ATCC 29342 / M129 / Subtype 1) (Mycoplasmoides pneumoniae).